Here is a 159-residue protein sequence, read N- to C-terminus: Endoribonuclease YbeY (159 aa).

3 residues coordinate Zn(2+): histidine 126, histidine 130, and histidine 136.

It belongs to the endoribonuclease YbeY family. The cofactor is Zn(2+).

The protein resides in the cytoplasm. Its function is as follows. Single strand-specific metallo-endoribonuclease involved in late-stage 70S ribosome quality control and in maturation of the 3' terminus of the 16S rRNA. This chain is Endoribonuclease YbeY, found in Thermodesulfovibrio yellowstonii (strain ATCC 51303 / DSM 11347 / YP87).